Consider the following 92-residue polypeptide: Small ribosomal subunit protein uS19c (92 aa).

The protein belongs to the universal ribosomal protein uS19 family.

It is found in the plastid. The protein resides in the chloroplast. Protein S19 forms a complex with S13 that binds strongly to the 16S ribosomal RNA. The sequence is that of Small ribosomal subunit protein uS19c (rps19) from Glycine max (Soybean).